A 404-amino-acid polypeptide reads, in one-letter code: Tryptophan synthase beta chain (404 aa).

Lys-94 bears the N6-(pyridoxal phosphate)lysine mark.

The protein belongs to the TrpB family. In terms of assembly, tetramer of two alpha and two beta chains. Pyridoxal 5'-phosphate serves as cofactor.

It catalyses the reaction (1S,2R)-1-C-(indol-3-yl)glycerol 3-phosphate + L-serine = D-glyceraldehyde 3-phosphate + L-tryptophan + H2O. The protein operates within amino-acid biosynthesis; L-tryptophan biosynthesis; L-tryptophan from chorismate: step 5/5. The beta subunit is responsible for the synthesis of L-tryptophan from indole and L-serine. The sequence is that of Tryptophan synthase beta chain from Staphylococcus aureus (strain USA300).